A 1499-amino-acid chain; its full sequence is Autophagy-related protein 2 (1499 aa).

Over residues 211 to 221 (EQSVPSYGSSS) the composition is skewed to polar residues. Residues 211–237 (EQSVPSYGSSSSDKEDDNTSDSEDPLS) are disordered. The span at 224 to 234 (KEDDNTSDSED) shows a compositional bias: acidic residues.

This sequence belongs to the ATG2 family.

It is found in the preautophagosomal structure membrane. Its subcellular location is the endoplasmic reticulum membrane. It catalyses the reaction a 1,2-diacyl-sn-glycero-3-phosphocholine(in) = a 1,2-diacyl-sn-glycero-3-phosphocholine(out). It carries out the reaction a 1,2-diacyl-sn-glycero-3-phospho-L-serine(in) = a 1,2-diacyl-sn-glycero-3-phospho-L-serine(out). The catalysed reaction is a 1,2-diacyl-sn-glycero-3-phosphoethanolamine(in) = a 1,2-diacyl-sn-glycero-3-phosphoethanolamine(out). Functionally, lipid transfer protein required for autophagosome completion and peroxisome degradation. Tethers the edge of the isolation membrane (IM) to the endoplasmic reticulum (ER) and mediates direct lipid transfer from ER to IM for IM expansion. ATG2 binds to the ER exit site (ERES), which is the membrane source for autophagosome formation, using basic residues in its N-terminal region (NR) and to the expanding edge of the IM through its C-terminal region. The latter binding is assisted by an ATG18-PtdIns3P interaction. ATG2 then extracts phospholipids from the membrane source using its NR and transfers them to ATG9 to the IM through its predicted beta-sheet-rich structure for membrane expansion. The sequence is that of Autophagy-related protein 2 from Kluyveromyces marxianus (strain DMKU3-1042 / BCC 29191 / NBRC 104275) (Yeast).